The chain runs to 303 residues: Signal recognition particle receptor FtsY (303 aa).

GTP-binding positions include G108–T115, D190–R194, and T254–D257.

This sequence belongs to the GTP-binding SRP family. FtsY subfamily. Part of the signal recognition particle protein translocation system, which is composed of SRP and FtsY. SRP is a ribonucleoprotein composed of Ffh and a 4.5S RNA molecule.

The protein localises to the cell inner membrane. It is found in the cytoplasm. The catalysed reaction is GTP + H2O = GDP + phosphate + H(+). Involved in targeting and insertion of nascent membrane proteins into the cytoplasmic membrane. Acts as a receptor for the complex formed by the signal recognition particle (SRP) and the ribosome-nascent chain (RNC). Interaction with SRP-RNC leads to the transfer of the RNC complex to the Sec translocase for insertion into the membrane, the hydrolysis of GTP by both Ffh and FtsY, and the dissociation of the SRP-FtsY complex into the individual components. The polypeptide is Signal recognition particle receptor FtsY (Rickettsia typhi (strain ATCC VR-144 / Wilmington)).